The sequence spans 503 residues: Plant-specific TFIIB-related protein 1 (503 aa).

The TFIIB-type zinc-finger motif lies at 1–33 (MKCPYCSSAQGRCTTTSSGRSITECSSCGRVME). Disordered regions lie at residues 328–366 (PEKA…AKPI), 411–431 (NAMD…LGDK), 436–455 (IYLR…TGIS), and 468–503 (GSSS…HGDF). The segment covering 333–346 (PTTTISTTRSTTPR) has biased composition (low complexity). The span at 355-366 (FVEKDKPSAKPI) shows a compositional bias: basic and acidic residues.

Ubiquinated. Subsequent degradation by the proteasome pathway. As to expression, widely expressed.

Its subcellular location is the plastid. It is found in the chloroplast outer membrane. The protein resides in the nucleus. Functionally, plant-specific TFIIB-related protein that may be involved in an intracellular signaling pathway between plastids and the nucleus. May act as general transcription factor (GTF) of RNA polymerase I-dependent transcription and rRNA synthesis. Forms a ternary complex with TBP2 and the rDNA promoter region. This chain is Plant-specific TFIIB-related protein 1, found in Arabidopsis thaliana (Mouse-ear cress).